Reading from the N-terminus, the 197-residue chain is Holliday junction resolvase RecU (197 aa).

The disordered stretch occupies residues 1–21 (MVNYPSGVRAGGYPQKKKNQN). 4 residues coordinate Mg(2+): Thr82, Asp84, Asp97, and Gln116.

The protein belongs to the RecU family. It depends on Mg(2+) as a cofactor.

It localises to the cytoplasm. It carries out the reaction Endonucleolytic cleavage at a junction such as a reciprocal single-stranded crossover between two homologous DNA duplexes (Holliday junction).. Its function is as follows. Endonuclease that resolves Holliday junction intermediates in genetic recombination. Cleaves mobile four-strand junctions by introducing symmetrical nicks in paired strands. Promotes annealing of linear ssDNA with homologous dsDNA. Required for DNA repair, homologous recombination and chromosome segregation. In Oenococcus oeni (strain ATCC BAA-331 / PSU-1), this protein is Holliday junction resolvase RecU.